The primary structure comprises 63 residues: Large ribosomal subunit protein uL29 (63 aa).

This sequence belongs to the universal ribosomal protein uL29 family.

This Pseudomonas fluorescens (strain ATCC BAA-477 / NRRL B-23932 / Pf-5) protein is Large ribosomal subunit protein uL29.